The chain runs to 331 residues: Glycerophosphodiester phosphodiesterase 1 (331 aa).

The Cytoplasmic segment spans residues 1 to 2 (MW). The chain crosses the membrane as a helical span at residues 3-23 (LWEEQGGLMGPFSFLLLVLLL). At 24–254 (LTRSPFNACL…WKQSMFVALD (231 aa)) the chain is on the lumenal side. Positions 65–331 (VSAIAHRGGS…SMLEDCTPEF (267 aa)) constitute a GP-PDE domain. The Mg(2+) site is built by Glu97 and Asp99. Asn168 carries N-linked (GlcNAc...) asparagine glycosylation. Residue Asp174 coordinates Mg(2+). N-linked (GlcNAc...) asparagine glycosylation occurs at Asn198. The chain crosses the membrane as a helical span at residues 255 to 275 (ILLDWSMHNILWYLCGVSAFL). The Cytoplasmic portion of the chain corresponds to 276-331 (AQKDFISPDYVKKWSAKGIQVVAWTVNTFDEKSYYESHLGSSYITDSMLEDCTPEF).

Belongs to the glycerophosphoryl diester phosphodiesterase family. As to quaternary structure, interacts with PRAF2. Interacts with RGS16. Requires Mg(2+) as cofactor. Post-translationally, N-glycosylated.

It is found in the cell membrane. It localises to the cytoplasmic vesicle membrane. The enzyme catalyses sn-glycero-3-phospho-1D-myo-inositol + H2O = myo-inositol + sn-glycerol 3-phosphate + H(+). The catalysed reaction is 1-O-(1Z-octadecenyl)-sn-glycero-3-phospho-(N-5Z,8Z,11Z,14Z-eicosatetraenoyl)-ethanolamine + H2O = 1-O-(1Z-octadecenyl)-sn-glycero-3-phosphate + N-(5Z,8Z,11Z,14Z-eicosatetraenoyl)-ethanolamine + H(+). It carries out the reaction 1-O-(1Z-octadecenyl)-sn-glycero-3-phospho-(N-9Z-octadecenoyl)-ethanolamine + H2O = 1-O-(1Z-octadecenyl)-sn-glycero-3-phosphate + N-(9Z-octadecenoyl) ethanolamine + H(+). It catalyses the reaction 1-O-(1Z-octadecenyl)-sn-glycero-3-phospho-N-hexadecanoyl-ethanolamine + H2O = 1-O-(1Z-octadecenyl)-sn-glycero-3-phosphate + N-hexadecanoylethanolamine + H(+). The enzyme catalyses N-(4Z,7Z,10Z,13Z,16Z,19Z)-docosahexaenoyl-sn-glycero-3-phosphoethanolamine + H2O = N-(4Z,7Z,10Z,13Z,16Z,19Z)-docosahexaenoyl ethanolamine + sn-glycerol 3-phosphate + H(+). The catalysed reaction is N-eicosanoyl-sn-glycero-3-phosphoethanolamine + H2O = N-eicosanoyl ethanolamine + sn-glycerol 3-phosphate + H(+). It carries out the reaction N-hexadecanoyl-sn-glycero-3-phosphoethanolamine + H2O = N-hexadecanoylethanolamine + sn-glycerol 3-phosphate + H(+). It catalyses the reaction N-(9Z-octadecenoyl)-sn-glycero-3-phosphoethanolamine + H2O = N-(9Z-octadecenoyl) ethanolamine + sn-glycerol 3-phosphate + H(+). The enzyme catalyses N-(5Z,8Z,11Z,14Z-eicosatetraenoyl)-sn-glycero-3-phosphoethanolamine + H2O = N-(5Z,8Z,11Z,14Z-eicosatetraenoyl)-ethanolamine + sn-glycerol 3-phosphate + H(+). Its activity is regulated as follows. Inhibited by EDTA, calcium chloride, and zinc chloride. Enhanced by magnesium chloride. Glycerophosphodiester phosphodiesterase activity can be modulated by G-protein signaling pathways. Functionally, hydrolyzes the phosphodiester bond of glycerophosphodiesters such as glycerophosphoinositol (GroPIns) and glycerophosphoethanolamine (GroPEth), to yield a glycerol phosphate and an alcohol. Hydrolyzes glycerophospho-N-acylethanolamines to N-acylethanolamines in the brain and participates in bioactive N-acylethanolamine biosynthesis such as anandamide (an endocannabinoid), N-palmitoylethanolamine (an anti-inflammatory), and N-oleoylethanolamine (an anorexic). In addition, has a lysophospholipase D activity by hydrolyzing N-acyl-lysoplasmenylethanolamine (N-acyl-lysoPlsEt) to N-acylethanolamine. However lysophospholipase D activity is lower than glycerophosphodiester phosphodiesterase activity. Has little or no activity towards glycerophosphocholine. This Bos taurus (Bovine) protein is Glycerophosphodiester phosphodiesterase 1.